Reading from the N-terminus, the 372-residue chain is N-methyl-L-tryptophan oxidase (372 aa).

4-34 (DLIIIGSGSVGAAAGYYATRAGLNVLMTDAH) provides a ligand contact to FAD. Cysteine 308 carries the S-8alpha-FAD cysteine modification.

The protein belongs to the MSOX/MTOX family. MTOX subfamily. As to quaternary structure, monomer. FAD is required as a cofactor.

The catalysed reaction is N(alpha)-methyl-L-tryptophan + O2 + H2O = L-tryptophan + formaldehyde + H2O2. Its function is as follows. Catalyzes the oxidative demethylation of N-methyl-L-tryptophan. In Escherichia coli O1:K1 / APEC, this protein is N-methyl-L-tryptophan oxidase.